Reading from the N-terminus, the 132-residue chain is MCPECFFLMLFFCGYRACYCSSSFSSSSSSSSSSSFRSSPAYGFSGRPPGGAGCRERSQRSCLRPGGLPSLTRNPGLQRPFRSRRLCRAVACAPGIPAKGRRDVRGNAVSQTALHVVAAGPCSLPAGCHTPV.

The N-terminal stretch at 1–17 (MCPECFFLMLFFCGYRA) is a signal peptide. Positions 25 to 39 (SSSSSSSSSSSFRSS) are enriched in low complexity. The segment at 25 to 79 (SSSSSSSSSSSFRSSPAYGFSGRPPGGAGCRERSQRSCLRPGGLPSLTRNPGLQR) is disordered.

This is an uncharacterized protein from Escherichia coli (strain K12).